Reading from the N-terminus, the 180-residue chain is Large ribosomal subunit protein uL5 (180 aa).

The protein belongs to the universal ribosomal protein uL5 family. Part of the 50S ribosomal subunit; part of the 5S rRNA/L5/L18/L25 subcomplex. Contacts the 5S rRNA and the P site tRNA. Forms a bridge to the 30S subunit in the 70S ribosome.

Its function is as follows. This is one of the proteins that bind and probably mediate the attachment of the 5S RNA into the large ribosomal subunit, where it forms part of the central protuberance. In the 70S ribosome it contacts protein S13 of the 30S subunit (bridge B1b), connecting the 2 subunits; this bridge is implicated in subunit movement. Contacts the P site tRNA; the 5S rRNA and some of its associated proteins might help stabilize positioning of ribosome-bound tRNAs. The protein is Large ribosomal subunit protein uL5 of Chlamydia abortus (strain DSM 27085 / S26/3) (Chlamydophila abortus).